The sequence spans 207 residues: Ribosomal RNA small subunit methyltransferase G (207 aa).

Residues G73, L78, 124 to 125 (VE), and R139 contribute to the S-adenosyl-L-methionine site.

This sequence belongs to the methyltransferase superfamily. RNA methyltransferase RsmG family.

The protein resides in the cytoplasm. The enzyme catalyses guanosine(527) in 16S rRNA + S-adenosyl-L-methionine = N(7)-methylguanosine(527) in 16S rRNA + S-adenosyl-L-homocysteine. Specifically methylates the N7 position of guanine in position 527 of 16S rRNA. This Shigella dysenteriae serotype 1 (strain Sd197) protein is Ribosomal RNA small subunit methyltransferase G.